Here is a 163-residue protein sequence, read N- to C-terminus: 2-C-methyl-D-erythritol 2,4-cyclodiphosphate synthase (163 aa).

A divalent metal cation-binding residues include Asp12 and His14. 4-CDP-2-C-methyl-D-erythritol 2-phosphate contacts are provided by residues 12-14 (DVH) and 38-39 (HS). His46 provides a ligand contact to a divalent metal cation. 4-CDP-2-C-methyl-D-erythritol 2-phosphate contacts are provided by residues 60–62 (DIG), 136–139 (TTSE), Phe143, and Arg146.

It belongs to the IspF family. Homotrimer. A divalent metal cation is required as a cofactor.

The enzyme catalyses 4-CDP-2-C-methyl-D-erythritol 2-phosphate = 2-C-methyl-D-erythritol 2,4-cyclic diphosphate + CMP. It participates in isoprenoid biosynthesis; isopentenyl diphosphate biosynthesis via DXP pathway; isopentenyl diphosphate from 1-deoxy-D-xylulose 5-phosphate: step 4/6. Functionally, involved in the biosynthesis of isopentenyl diphosphate (IPP) and dimethylallyl diphosphate (DMAPP), two major building blocks of isoprenoid compounds. Catalyzes the conversion of 4-diphosphocytidyl-2-C-methyl-D-erythritol 2-phosphate (CDP-ME2P) to 2-C-methyl-D-erythritol 2,4-cyclodiphosphate (ME-CPP) with a corresponding release of cytidine 5-monophosphate (CMP). This is 2-C-methyl-D-erythritol 2,4-cyclodiphosphate synthase from Xanthomonas oryzae pv. oryzae (strain MAFF 311018).